The sequence spans 878 residues: Alanine--tRNA ligase (878 aa).

Zn(2+) is bound by residues histidine 567, histidine 571, cysteine 668, and histidine 672.

Belongs to the class-II aminoacyl-tRNA synthetase family. It depends on Zn(2+) as a cofactor.

It is found in the cytoplasm. The catalysed reaction is tRNA(Ala) + L-alanine + ATP = L-alanyl-tRNA(Ala) + AMP + diphosphate. Its function is as follows. Catalyzes the attachment of alanine to tRNA(Ala) in a two-step reaction: alanine is first activated by ATP to form Ala-AMP and then transferred to the acceptor end of tRNA(Ala). Also edits incorrectly charged Ser-tRNA(Ala) and Gly-tRNA(Ala) via its editing domain. This Magnetococcus marinus (strain ATCC BAA-1437 / JCM 17883 / MC-1) protein is Alanine--tRNA ligase.